The sequence spans 380 residues: Cytochrome b (380 aa).

4 consecutive transmembrane segments (helical) span residues 34-54 (FGSLLGICLMTQILTGLLLAM), 78-99 (WLIRNLHANGASFFFICIYFHI), 114-134 (WNTGVVLLLTLMATAFVGYVL), and 179-199 (FFALHFLLPFMIAGLTLIHLT). Heme b contacts are provided by His-84 and His-98. The heme b site is built by His-183 and His-197. Residue His-202 participates in a ubiquinone binding. 4 helical membrane passes run 227 to 247 (LKDILGFTLMLLPLTTLALFS), 289 to 309 (LGGVLALAASVLILFLIPFLH), 321 to 341 (LSQLLFWVLVANLLILTWVGS), and 348 to 368 (FIIIGQLASLTYFAILLVLFP).

The protein belongs to the cytochrome b family. As to quaternary structure, the cytochrome bc1 complex contains 11 subunits: 3 respiratory subunits (MT-CYB, CYC1 and UQCRFS1), 2 core proteins (UQCRC1 and UQCRC2) and 6 low-molecular weight proteins (UQCRH/QCR6, UQCRB/QCR7, UQCRQ/QCR8, UQCR10/QCR9, UQCR11/QCR10 and a cleavage product of UQCRFS1). This cytochrome bc1 complex then forms a dimer. The cofactor is heme b.

It is found in the mitochondrion inner membrane. Functionally, component of the ubiquinol-cytochrome c reductase complex (complex III or cytochrome b-c1 complex) that is part of the mitochondrial respiratory chain. The b-c1 complex mediates electron transfer from ubiquinol to cytochrome c. Contributes to the generation of a proton gradient across the mitochondrial membrane that is then used for ATP synthesis. The protein is Cytochrome b (MT-CYB) of Halobaena caerulea (Blue petrel).